We begin with the raw amino-acid sequence, 1019 residues long: Protein HIRA (1019 aa).

WD repeat units lie at residues 11 to 53 (HNGK…KEED), 68 to 107 (NHLA…GPST), 129 to 168 (SHSG…EILA), 172 to 211 (GHSG…LETS), 220 to 263 (GGTT…TNMD), 266 to 322 (GHRK…PLVV), and 326 to 367 (LFDK…DPLS). An interaction with RBBP4 region spans residues 23–443 (PDGTKFATGG…ASMVNGESLE (421 aa)). Composition is skewed to low complexity over residues 406–415 (QRQQQQQAEQ) and 544–561 (ATSV…VLTT). Disordered regions lie at residues 406-433 (QRQQ…APKV), 513-561 (ANSL…VLTT), and 599-633 (LKDQ…LSAP). Positions 444–1019 (DIRKNLLKKQ…TEYQEQLDIL (576 aa)) are interaction with HDAC1. The segment covering 599-625 (LKDQNLIKDNKPKDILESSSDSEEKIP) has biased composition (basic and acidic residues). The segment at 960 to 1019 (RLRELCKDLLGPVHYSRGSQWESTVMGLRKRELLKELLPVIGQNLFQRLFTEYQEQLDIL) is interaction with HDAC2.

It belongs to the WD repeat HIR1 family. In terms of assembly, interacts with ASF1, HDAC1, HDAC2 and RBBP4.

The protein localises to the nucleus. In terms of biological role, cooperates with ASF1A to promote replication-independent chromatin assembly. May regulate the transcription of a variety of genes controlling cell growth. The polypeptide is Protein HIRA (HIRA) (Gallus gallus (Chicken)).